Consider the following 231-residue polypeptide: GDSL lipase Rv0518 (231 aa).

A signal peptide spans 1–20 (MSRPGTYVIGLTLLVGLVVG). Residue Ser46 is the Nucleophile of the active site. The active-site Proton donor is the Asp205. His208 acts as the Proton acceptor in catalysis.

Belongs to the 'GDSL' lipolytic enzyme family.

The protein resides in the secreted. It localises to the cell wall. It is found in the extracellular space. It carries out the reaction a fatty acid ester + H2O = an aliphatic alcohol + a fatty acid + H(+). It catalyses the reaction decanoate ester + H2O = decanoate + an aliphatic alcohol + H(+). The enzyme catalyses an octanoate ester + H2O = an aliphatic alcohol + octanoate + H(+). The catalysed reaction is a dodecanoate ester + H2O = an aliphatic alcohol + dodecanoate + H(+). It carries out the reaction a tetradecanoate ester + H2O = an aliphatic alcohol + tetradecanoate + H(+). Activity is inhibited by the serine modifier phenylmethylsulfonyl fluoride (PMSF). GDSL lipase that catalyzes the hydrolysis of p-nitrophenyl (pNP) esters. pNP-decanoate (C10) is the preferred substrate. It can also use pNP-octanoate (C8), pNP-dodecanoate (C12) and pNP-tetradecanoate (C14). Has lower activity with pNP-butyrate (C4), pNP-palmitate (C16) and pNP-stearate (C18). Does not show phospholipase A1 activity. Might help bacteria to utilize available lipids for its growth as well as provide resistance to various intracellular stresses by cell wall modulation resulting in enhanced intracellular survival. This is GDSL lipase Rv0518 from Mycobacterium tuberculosis (strain ATCC 25618 / H37Rv).